We begin with the raw amino-acid sequence, 119 residues long: Beta-2-microglobulin (119 aa).

The first 20 residues, 1–20 (MARFVVVPLLVLVSLFGLEA), serve as a signal peptide directing secretion. Residues 25–114 (PKIQVYSRYP…VTFSTPKTVK (90 aa)) form the Ig-like C1-type domain. Cysteines 45 and 100 form a disulfide.

The protein belongs to the beta-2-microglobulin family. As to quaternary structure, heterodimer of an alpha chain and a beta chain. Beta-2-microglobulin is the beta-chain of major histocompatibility complex class I molecules.

Its subcellular location is the secreted. Component of the class I major histocompatibility complex (MHC). Involved in the presentation of peptide antigens to the immune system. This Saguinus oedipus (Cotton-top tamarin) protein is Beta-2-microglobulin (B2M).